The following is a 673-amino-acid chain: Protein-arginine deiminase type-2 (673 aa).

Residue Met-1 is modified to N-acetylmethionine. Residues Asp-131, Asp-133, Asp-135, Glu-139, Asn-162, Asp-164, Asp-166, Asp-174, Asp-177, Lys-179, Asp-185, and Asp-188 each coordinate Ca(2+). A Citrulline modification is found at Arg-352. Residues Glu-362, Asp-397, Phe-416, Leu-419, and Glu-420 each coordinate Ca(2+). Catalysis depends on Cys-655, which acts as the Nucleophile.

It belongs to the protein arginine deiminase family. In terms of assembly, homodimer. The cofactor is Ca(2+). Expressed in various tissues including muscle, uterus, spinal cord, salivary gland and pancreas.

The protein localises to the cytoplasm. The enzyme catalyses L-arginyl-[protein] + H2O = L-citrullyl-[protein] + NH4(+). In terms of biological role, catalyzes the deimination of arginine residues of proteins. This chain is Protein-arginine deiminase type-2 (Padi2), found in Mus musculus (Mouse).